The primary structure comprises 450 residues: Tubulin alpha chain, testis-specific (450 aa).

The short motif at 1-4 (MREC) is the MREC motif element. Position 11 (Q11) interacts with GTP. At K40 the chain carries N6-acetyllysine. 7 residues coordinate GTP: E71, S140, G144, T145, T179, N206, and N228. Mg(2+) is bound at residue E71. Residue E254 is part of the active site.

It belongs to the tubulin family. Dimer of alpha and beta chains. A typical microtubule is a hollow water-filled tube with an outer diameter of 25 nm and an inner diameter of 15 nM. Alpha-beta heterodimers associate head-to-tail to form protofilaments running lengthwise along the microtubule wall with the beta-tubulin subunit facing the microtubule plus end conferring a structural polarity. Microtubules usually have 13 protofilaments but different protofilament numbers can be found in some organisms and specialized cells. Mg(2+) serves as cofactor. Post-translationally, some glutamate residues at the C-terminus are polyglycylated, resulting in polyglycine chains on the gamma-carboxyl group. Glycylation is mainly limited to tubulin incorporated into axonemes (cilia and flagella) whereas glutamylation is prevalent in neuronal cells, centrioles, axonemes, and the mitotic spindle. Both modifications can coexist on the same protein on adjacent residues, and lowering polyglycylation levels increases polyglutamylation, and reciprocally. The precise function of polyglycylation is still unclear. In terms of processing, some glutamate residues at the C-terminus are polyglutamylated, resulting in polyglutamate chains on the gamma-carboxyl group. Polyglutamylation plays a key role in microtubule severing by spastin (SPAST). SPAST preferentially recognizes and acts on microtubules decorated with short polyglutamate tails: severing activity by SPAST increases as the number of glutamates per tubulin rises from one to eight, but decreases beyond this glutamylation threshold. Acetylation of alpha chains at Lys-40 is located inside the microtubule lumen. This modification has been correlated with increased microtubule stability, intracellular transport and ciliary assembly. Post-translationally, undergoes a tyrosination/detyrosination cycle, the cyclic removal and re-addition of a C-terminal tyrosine residue by the enzymes tubulin tyrosine carboxypeptidase (MATCAP, VASH1 or VASH2) and tubulin tyrosine ligase (TTL), respectively. In terms of processing, tyrosination promotes microtubule interaction with CAP-Gly microtubule plus-end tracking proteins. Tyrosinated tubulins regulate the initiation of dynein-driven motility. Detyrosination is involved in metaphase plate congression by guiding chromosomes during mitosis. Detyrosination increases microtubules-dependent mechanotransduction in dystrophic cardiac and skeletal muscle. In cardiomyocytes, detyrosinated microtubules are required to resist to contractile compression during contraction. As to expression, testis specific.

It localises to the cytoplasm. Its subcellular location is the cytoskeleton. The catalysed reaction is GTP + H2O = GDP + phosphate + H(+). In terms of biological role, tubulin is the major constituent of microtubules, a cylinder consisting of laterally associated linear protofilaments composed of alpha- and beta-tubulin heterodimers. Microtubules grow by the addition of GTP-tubulin dimers to the microtubule end, where a stabilizing cap forms. Below the cap, tubulin dimers are in GDP-bound state, owing to GTPase activity of alpha-tubulin. This Oncorhynchus mykiss (Rainbow trout) protein is Tubulin alpha chain, testis-specific.